A 292-amino-acid chain; its full sequence is Phosphatidylserine decarboxylase proenzyme (292 aa).

Residues Asp-92, His-149, and Ser-256 each act as charge relay system; for autoendoproteolytic cleavage activity in the active site. Residue Ser-256 is the Schiff-base intermediate with substrate; via pyruvic acid; for decarboxylase activity of the active site. Position 256 is a pyruvic acid (Ser); by autocatalysis (Ser-256).

Belongs to the phosphatidylserine decarboxylase family. PSD-B subfamily. Prokaryotic type I sub-subfamily. As to quaternary structure, heterodimer of a large membrane-associated beta subunit and a small pyruvoyl-containing alpha subunit. Pyruvate is required as a cofactor. Post-translationally, is synthesized initially as an inactive proenzyme. Formation of the active enzyme involves a self-maturation process in which the active site pyruvoyl group is generated from an internal serine residue via an autocatalytic post-translational modification. Two non-identical subunits are generated from the proenzyme in this reaction, and the pyruvate is formed at the N-terminus of the alpha chain, which is derived from the carboxyl end of the proenzyme. The autoendoproteolytic cleavage occurs by a canonical serine protease mechanism, in which the side chain hydroxyl group of the serine supplies its oxygen atom to form the C-terminus of the beta chain, while the remainder of the serine residue undergoes an oxidative deamination to produce ammonia and the pyruvoyl prosthetic group on the alpha chain. During this reaction, the Ser that is part of the protease active site of the proenzyme becomes the pyruvoyl prosthetic group, which constitutes an essential element of the active site of the mature decarboxylase.

It localises to the cell membrane. The enzyme catalyses a 1,2-diacyl-sn-glycero-3-phospho-L-serine + H(+) = a 1,2-diacyl-sn-glycero-3-phosphoethanolamine + CO2. The protein operates within phospholipid metabolism; phosphatidylethanolamine biosynthesis; phosphatidylethanolamine from CDP-diacylglycerol: step 2/2. Functionally, catalyzes the formation of phosphatidylethanolamine (PtdEtn) from phosphatidylserine (PtdSer). This chain is Phosphatidylserine decarboxylase proenzyme, found in Baumannia cicadellinicola subsp. Homalodisca coagulata.